The following is a 208-amino-acid chain: Kinetochore protein Spc25 (208 aa).

Residues 31–101 (SKIAAKHQLI…KKQRRDELMG (71 aa)) adopt a coiled-coil conformation.

The protein belongs to the SPC25 family. As to quaternary structure, component of the Ndc80 complex, which is composed of Ndc80, Nuf2 and Spc25.

It is found in the nucleus. The protein resides in the chromosome. It localises to the centromere. Its subcellular location is the kinetochore. Functionally, acts as a component of the essential kinetochore-associated Ndc80 complex, which is required for chromosome segregation and spindle checkpoint activity during meiosis and mitosis. Required for kinetochore integrity and the organization of stable microtubule binding sites in the outer plate of the kinetochore. Participates in SAC signaling that responds specifically to disruptions in spindle microtubule dynamics. The NDC80 complex synergistically enhances the affinity of the SKA1 complex for microtubules and may allow the NDC80 complex to track depolymerizing microtubules. This is Kinetochore protein Spc25 from Drosophila mojavensis (Fruit fly).